A 395-amino-acid polypeptide reads, in one-letter code: MNSFSHVPPGFRFHPTDEELVDYYLRKKVASKRIEIDFIKDIDLYKIEPWDLQELCKIGHEEQSDWYFFSHKDKKYPTGTRTNRATKAGFWKATGRDKAIYLRHSLIGMRKTLVFYKGRAPNGQKSDWIMHEYRLETDENGTPQEEGWVVCRVFKKRLAAVRRMGDYDSSPSHWYDDQLSFMASELETNGQRRILPNHHQQQQHEHQQHMPYGLNASAYALNNPNLQCKQELELHYNHLVQRNHLLDESHLSFLQLPQLESPKIQQDNSNCNSLPYGTSNIDNNSSHNANLQQSNIAHEEQLNQGNQNFSSLYMNSGNEQVMDQVTDWRVLDKFVASQLSNEEAATASASIQNNAKDTSNAEYQVDEEKDPKRASDMGEEYTASTSSSCQIDLWK.

In terms of domain architecture, NAC spans V7 to K156. Residues I107–R162 mediate DNA binding. Composition is skewed to polar residues over residues A344–E362 and T382–K395. Positions A344–K395 are disordered.

This sequence belongs to the plant vascular related NAC-domain protein family. In terms of assembly, interacts with NAC083/VNI2. In terms of tissue distribution, expressed in root, shoot and hypocotyl vascular elements, columella root caps, epidermal and cortex root cells and root-hypocotyl junctions. Observed predominantly in root imature xylem vessels. Present in root developing xylems. Specifically expressed in vessels in the secondary xylem of the root-hypocotyl region, and in vessels but not in interfascicular fibers in stems.

The protein localises to the nucleus. In terms of biological role, transcription activator that binds to the secondary wall NAC binding element (SNBE), 5'-(T/A)NN(C/T)(T/C/G)TNNNNNNNA(A/C)GN(A/C/T)(A/T)-3', in the promoter of target genes. Involved in xylem formation by promoting the expression of secondary wall-associated transcription factors and of genes involved in secondary wall biosynthesis and programmed cell death, genes driven by the secondary wall NAC binding element (SNBE). Triggers thickening of secondary walls. This Arabidopsis thaliana (Mouse-ear cress) protein is NAC domain-containing protein 7.